Here is a 217-residue protein sequence, read N- to C-terminus: Somatotropin (217 aa).

The signal sequence occupies residues 1–26 (MAPGSWFSPLFIAVITLGLQWPKEAA). His46 is a Zn(2+) binding site. Cys79 and Cys190 are joined by a disulfide. A Zn(2+)-binding site is contributed by Glu199. Residues Cys207 and Cys215 are joined by a disulfide bond.

Belongs to the somatotropin/prolactin family.

It is found in the secreted. Growth hormone plays an important role in growth control. The polypeptide is Somatotropin (GH) (Struthio camelus (Common ostrich)).